The sequence spans 514 residues: 2,3-bisphosphoglycerate-independent phosphoglycerate mutase (514 aa).

2 residues coordinate Mn(2+): Asp14 and Ser64. Ser64 functions as the Phosphoserine intermediate in the catalytic mechanism. Residues His125, 155 to 156 (RD), Arg187, Arg193, 263 to 266 (RADR), and Lys336 each bind substrate. Asp403, His407, Asp444, His445, and His463 together coordinate Mn(2+).

Belongs to the BPG-independent phosphoglycerate mutase family. In terms of assembly, monomer. Mn(2+) is required as a cofactor.

It catalyses the reaction (2R)-2-phosphoglycerate = (2R)-3-phosphoglycerate. It participates in carbohydrate degradation; glycolysis; pyruvate from D-glyceraldehyde 3-phosphate: step 3/5. Its function is as follows. Catalyzes the interconversion of 2-phosphoglycerate and 3-phosphoglycerate. This is 2,3-bisphosphoglycerate-independent phosphoglycerate mutase from Shigella dysenteriae serotype 1 (strain Sd197).